Consider the following 300-residue polypeptide: Tumor necrosis factor receptor superfamily member 6B (300 aa).

Residues 1–29 form the signal peptide; it reads MRALEGPGLSLLCLVLALPALLPVPAVRG. TNFR-Cys repeat units follow at residues 31-70, 72-113, 115-150, and 152-193; these read AETP…PTTC, PCPP…NRAC, CRTG…NTQC, and PCPP…DTLC. 8 cysteine pairs are disulfide-bonded: Cys-49/Cys-62, Cys-52/Cys-70, Cys-73/Cys-88, Cys-91/Cys-105, Cys-95/Cys-113, Cys-115/Cys-126, Cys-132/Cys-150, and Cys-153/Cys-168. Asn-173 is a glycosylation site (N-linked (GlcNAc...) asparagine). Cys-174 and Cys-193 are oxidised to a cystine.

In terms of tissue distribution, detected in fetal lung, brain and liver. Detected in adult stomach, spinal cord, lymph node, trachea, spleen, colon and lung. Highly expressed in several primary tumors from colon, stomach, rectum, esophagus and in SW480 colon carcinoma cells.

The protein localises to the secreted. In terms of biological role, decoy receptor that can neutralize the cytotoxic ligands TNFS14/LIGHT, TNFSF15 and TNFSF6/FASL. Protects against apoptosis. The sequence is that of Tumor necrosis factor receptor superfamily member 6B (TNFRSF6B) from Homo sapiens (Human).